Here is a 109-residue protein sequence, read N- to C-terminus: Cell division suppressor protein YneA (109 aa).

A LysM domain is found at 39–90 (SEVNVSEGDSLWALADQYAGKSDMAKADFVSWVEKENNLADGHVEAGDSVVI).

The protein belongs to the YneA family.

It is found in the cytoplasm. Its function is as follows. Inhibits cell division during the SOS response. Affects a later stage of the cell division protein assembly, after the assembly of the Z ring, by probably suppressing recruitment of FtsL and/or DivIC to the division machinery. This Listeria monocytogenes serotype 4b (strain CLIP80459) protein is Cell division suppressor protein YneA.